Reading from the N-terminus, the 68-residue chain is Small ribosomal subunit protein bS21 (68 aa).

Positions 39–68 (PPSVKRVRKKQESERRHRKERAMRRRMMEE) are disordered. The segment covering 54–68 (RHRKERAMRRRMMEE) has biased composition (basic residues).

It belongs to the bacterial ribosomal protein bS21 family.

The protein is Small ribosomal subunit protein bS21 of Orientia tsutsugamushi (strain Boryong) (Rickettsia tsutsugamushi).